The sequence spans 422 residues: 5-hydroxytryptamine receptor 1A (422 aa).

Residues 1–23 (MDVLSPGQGNNTTSPPAPFETGG) are disordered. At 1–38 (MDVLSPGQGNNTTSPPAPFETGGNTTGISDVTVSYQVI) the chain is on the extracellular side. 3 N-linked (GlcNAc...) asparagine glycosylation sites follow: asparagine 10, asparagine 11, and asparagine 24. A helical membrane pass occupies residues 39 to 59 (TSLLLGTLIFCAVLGNACVVA). At 60–73 (AIALERSLQNVANY) the chain is on the cytoplasmic side. A helical transmembrane segment spans residues 74–98 (LIGSLAVTDLMVSVLVLPMAALYQV). Residues 99–107 (LNKWTLGQV) lie on the Extracellular side of the membrane. The chain crosses the membrane as a helical span at residues 108 to 132 (TCDLFIALDVLCCTSSILHLCAIAL). A disulfide bond links cysteine 109 and cysteine 187. Residues aspartate 116 and cysteine 120 each contribute to the serotonin site. The short motif at 133 to 135 (DRY) is the DRY motif; important for ligand-induced conformation changes element. Residues 133–152 (DRYWAITDPIDYVNKRTPRR) are Cytoplasmic-facing. The chain crosses the membrane as a helical span at residues 153-174 (AAALISLTWLIGFLISIPPMLG). Topologically, residues 175-193 (WRTPEDRSDPDACTISKDH) are extracellular. Residues 194-216 (GYTIYSTFGAFYIPLLLMLVLYG) traverse the membrane as a helical segment. Over 217–346 (RIFRAARFRI…LARERKTVKT (130 aa)) the chain is Cytoplasmic. Residues 235 to 262 (KTGADTRHGASPAPQPKKSVNGESGSRN) are disordered. Residues threonine 314, lysine 345, threonine 346, and glycine 352 each contribute to the 1D-myo-inositol 4-phosphate site. Residues 347-370 (LGIIMGTFILCWLPFFIVALVLPF) traverse the membrane as a helical segment. Residues 371–378 (CESSCHMP) are Extracellular-facing. Residues 379-403 (TLLGAIINWLGYSNSLLNPVIYAYF) form a helical membrane-spanning segment. Positions 396–400 (NPVIY) match the NPxxY motif; important for ligand-induced conformation changes and signaling motif. Positions 403, 404, and 405 each coordinate 1D-myo-inositol 4-phosphate. Over 404-422 (NKDFQNAFKKIIKCKFCRQ) the chain is Cytoplasmic.

It belongs to the G-protein coupled receptor 1 family. 5-hydroxytryptamine receptor subfamily. HTR1A sub-subfamily. As to quaternary structure, heterodimer; heterodimerizes with GPER1. Interacts with YIF1B. Interacts with GPR39 and GALR1. Detected in lymph nodes, thymus and spleen. Detected in activated T-cells, but not in resting T-cells.

The protein localises to the cell membrane. It is found in the cell projection. Its subcellular location is the dendrite. G-protein coupled receptor activity is regulated by lipids: phosphatidylinositol 4-phosphate increases HTR1A-mediated activity. Binding to aripiprazol drug is regulated by cholesterol, which shapes the ligand-binding pocket, determining the specificity for aripiprazol. Activated by IHCH-7179 small molecule: IHCH-7179 acts both as an agonist activator for HTR1A and as an antagonist inhibitor for HTR2A. Activated by SEP-363856 small molecule: IHCH-7179 acts both as an agonist activator for HTR1A and TAAR1. Its function is as follows. G-protein coupled receptor for 5-hydroxytryptamine (serotonin). Also functions as a receptor for various drugs and psychoactive substances. Ligand binding causes a conformation change that triggers signaling via guanine nucleotide-binding proteins (G proteins) and modulates the activity of downstream effectors, such as adenylate cyclase. HTR1A is coupled to G(i)/G(o) G alpha proteins and mediates inhibitory neurotransmission: signaling inhibits adenylate cyclase activity and activates a phosphatidylinositol-calcium second messenger system that regulates the release of Ca(2+) ions from intracellular stores. Beta-arrestin family members regulate signaling by mediating both receptor desensitization and resensitization processes. Plays a role in the regulation of 5-hydroxytryptamine release and in the regulation of dopamine and 5-hydroxytryptamine metabolism. Plays a role in the regulation of dopamine and 5-hydroxytryptamine levels in the brain, and thereby affects neural activity, mood and behavior. Plays a role in the response to anxiogenic stimuli. This is 5-hydroxytryptamine receptor 1A from Homo sapiens (Human).